Here is a 392-residue protein sequence, read N- to C-terminus: uncharacterized protein (392 aa).

A signal peptide spans 1–19 (MRRIVCPPVLFLSASLLTG). Cysteine 20 carries the N-palmitoyl cysteine lipid modification. Cysteine 20 carries S-diacylglycerol cysteine lipidation. A disordered region spans residues 148 to 173 (SSGSSGGGGGGSGSSSDGGIKNGSDE). A compositionally biased stretch (gly residues) spans 151 to 160 (SSGGGGGGSG).

This sequence belongs to the TP013X lipoprotein family.

Its subcellular location is the cell membrane. This is an uncharacterized protein from Treponema pallidum (strain Nichols).